Consider the following 250-residue polypeptide: Glycerol-1-phosphate phosphohydrolase 2 (250 aa).

D18 (nucleophile) is an active-site residue. Mg(2+) is bound by residues D18 and D20. Catalysis depends on D20, which acts as the Proton donor. Residue K64 forms a Glycyl lysine isopeptide (Lys-Gly) (interchain with G-Cter in ubiquitin) linkage. Position 90 is a phosphoserine (S90). K144 participates in a covalent cross-link: Glycyl lysine isopeptide (Lys-Gly) (interchain with G-Cter in ubiquitin). D179 contacts Mg(2+).

This sequence belongs to the HAD-like hydrolase superfamily. DOG/GPP family. As to quaternary structure, monomer. Mg(2+) is required as a cofactor.

It is found in the cytoplasm. It localises to the nucleus. It carries out the reaction sn-glycerol 1-phosphate + H2O = glycerol + phosphate. It catalyses the reaction sn-glycerol 3-phosphate + H2O = glycerol + phosphate. Glycerol-1-phosphate phosphohydrolase involved in glycerol biosynthesis. Plays a role in osmoadaptation. The protein is Glycerol-1-phosphate phosphohydrolase 2 of Saccharomyces cerevisiae (strain ATCC 204508 / S288c) (Baker's yeast).